A 265-amino-acid chain; its full sequence is Tryptophan synthase alpha chain (265 aa).

Catalysis depends on proton acceptor residues Glu-49 and Asp-60.

This sequence belongs to the TrpA family. As to quaternary structure, tetramer of two alpha and two beta chains.

The catalysed reaction is (1S,2R)-1-C-(indol-3-yl)glycerol 3-phosphate + L-serine = D-glyceraldehyde 3-phosphate + L-tryptophan + H2O. It functions in the pathway amino-acid biosynthesis; L-tryptophan biosynthesis; L-tryptophan from chorismate: step 5/5. Functionally, the alpha subunit is responsible for the aldol cleavage of indoleglycerol phosphate to indole and glyceraldehyde 3-phosphate. The polypeptide is Tryptophan synthase alpha chain (Cupriavidus metallidurans (strain ATCC 43123 / DSM 2839 / NBRC 102507 / CH34) (Ralstonia metallidurans)).